A 191-amino-acid chain; its full sequence is Phosphopantetheine adenylyltransferase (191 aa).

Serine 8 is a substrate binding site. ATP is bound by residues 8–9 and histidine 16; that span reads SF. Substrate contacts are provided by lysine 40, threonine 72, and arginine 86. ATP-binding positions include 87–89, glutamate 97, and 122–128; these read GLR and YSFLSSS.

This sequence belongs to the bacterial CoaD family. As to quaternary structure, homohexamer. Mg(2+) serves as cofactor.

The protein resides in the cytoplasm. The enzyme catalyses (R)-4'-phosphopantetheine + ATP + H(+) = 3'-dephospho-CoA + diphosphate. It functions in the pathway cofactor biosynthesis; coenzyme A biosynthesis; CoA from (R)-pantothenate: step 4/5. Functionally, reversibly transfers an adenylyl group from ATP to 4'-phosphopantetheine, yielding dephospho-CoA (dPCoA) and pyrophosphate. The chain is Phosphopantetheine adenylyltransferase from Nostoc sp. (strain PCC 7120 / SAG 25.82 / UTEX 2576).